Here is a 181-residue protein sequence, read N- to C-terminus: Alkyl hydroperoxide reductase AhpD (181 aa).

Cys131 (proton donor) is an active-site residue. Cys131 and Cys134 form a disulfide bridge. Cys134 (cysteine sulfenic acid (-SOH) intermediate) is an active-site residue.

This sequence belongs to the AhpD family.

The catalysed reaction is N(6)-[(R)-dihydrolipoyl]-L-lysyl-[lipoyl-carrier protein] + a hydroperoxide = N(6)-[(R)-lipoyl]-L-lysyl-[lipoyl-carrier protein] + an alcohol + H2O. Functionally, antioxidant protein with alkyl hydroperoxidase activity. Required for the reduction of the AhpC active site cysteine residues and for the regeneration of the AhpC enzyme activity. The polypeptide is Alkyl hydroperoxide reductase AhpD (Rhodopseudomonas palustris (strain BisA53)).